The primary structure comprises 115 residues: Probable non-functional T cell receptor beta variable 23-1 (115 aa).

Residues 1–21 form the signal peptide; sequence MGTRLLGCAALCLLAADSFHA. Residues 22 to 115 form the Ig-like domain; sequence KVTQTPGHLV…TALYLCASSQ (94 aa). C42 and C111 form a disulfide bridge.

Alpha-beta TR is a heterodimer composed of an alpha and beta chain; disulfide-linked. The alpha-beta TR is associated with the transmembrane signaling CD3 coreceptor proteins to form the TR-CD3 (TcR or TCR). The assembly of alpha-beta TR heterodimers with CD3 occurs in the endoplasmic reticulum where a single alpha-beta TR heterodimer associates with one CD3D-CD3E heterodimer, one CD3G-CD3E heterodimer and one CD247 homodimer forming a stable octameric structure. CD3D-CD3E and CD3G-CD3E heterodimers preferentially associate with TR alpha and TR beta chains, respectively. The association of the CD247 homodimer is the last step of TcR assembly in the endoplasmic reticulum and is required for transport to the cell surface.

It localises to the cell membrane. In terms of biological role, probable non-functional open reading frame (ORF) of V region of the variable domain of T cell receptor (TR) beta chain. Non-functional ORF generally cannot participate in the synthesis of a productive T cell receptor (TR) chain due to altered V-(D)-J or switch recombination and/or splicing site (at mRNA level) and/or conserved amino acid change (protein level). Alpha-beta T cell receptors are antigen specific receptors which are essential to the immune response and are present on the cell surface of T lymphocytes. Recognize peptide-major histocompatibility (MH) (pMH) complexes that are displayed by antigen presenting cells (APC), a prerequisite for efficient T cell adaptive immunity against pathogens. Binding of alpha-beta TR to pMH complex initiates TR-CD3 clustering on the cell surface and intracellular activation of LCK that phosphorylates the ITAM motifs of CD3G, CD3D, CD3E and CD247 enabling the recruitment of ZAP70. In turn ZAP70 phosphorylates LAT, which recruits numerous signaling molecules to form the LAT signalosome. The LAT signalosome propagates signal branching to three major signaling pathways, the calcium, the mitogen-activated protein kinase (MAPK) kinase and the nuclear factor NF-kappa-B (NF-kB) pathways, leading to the mobilization of transcription factors that are critical for gene expression and essential for T cell growth and differentiation. The T cell repertoire is generated in the thymus, by V-(D)-J rearrangement. This repertoire is then shaped by intrathymic selection events to generate a peripheral T cell pool of self-MH restricted, non-autoaggressive T cells. Post-thymic interaction of alpha-beta TR with the pMH complexes shapes TR structural and functional avidity. The sequence is that of Probable non-functional T cell receptor beta variable 23-1 from Homo sapiens (Human).